The following is a 142-amino-acid chain: Hemoglobin subunit alpha-1 (142 aa).

A Globin domain is found at 2 to 142 (KLSADDKHNV…VGYVLASKYR (141 aa)). O2 is bound at residue histidine 59. Histidine 88 provides a ligand contact to heme b.

The protein belongs to the globin family. In terms of assembly, major hemoglobin is a heterotetramer of two alpha-1 chains and two beta-1 chains. As to expression, red blood cells.

Involved in oxygen transport from the lung to the various peripheral tissues. The protein is Hemoglobin subunit alpha-1 of Triturus cristatus (Great crested newt).